The following is a 274-amino-acid chain: Shikimate dehydrogenase (NADP(+)) (274 aa).

Residues 14–16 (SKS) and T60 contribute to the shikimate site. K64 (proton acceptor) is an active-site residue. NADP(+) is bound at residue E76. Residues N85 and D101 each coordinate shikimate. NADP(+) is bound by residues 126–130 (GAGGA), 150–155 (NRTARK), and M214. Y216 provides a ligand contact to shikimate. Position 238 (G238) interacts with NADP(+).

It belongs to the shikimate dehydrogenase family. Homodimer.

It carries out the reaction shikimate + NADP(+) = 3-dehydroshikimate + NADPH + H(+). The protein operates within metabolic intermediate biosynthesis; chorismate biosynthesis; chorismate from D-erythrose 4-phosphate and phosphoenolpyruvate: step 4/7. Involved in the biosynthesis of the chorismate, which leads to the biosynthesis of aromatic amino acids. Catalyzes the reversible NADPH linked reduction of 3-dehydroshikimate (DHSA) to yield shikimate (SA). The sequence is that of Shikimate dehydrogenase (NADP(+)) from Pseudomonas aeruginosa (strain ATCC 15692 / DSM 22644 / CIP 104116 / JCM 14847 / LMG 12228 / 1C / PRS 101 / PAO1).